The following is a 60-amino-acid chain: UPF0181 protein PMI1604 (60 aa).

This sequence belongs to the UPF0181 family.

The sequence is that of UPF0181 protein PMI1604 from Proteus mirabilis (strain HI4320).